A 119-amino-acid polypeptide reads, in one-letter code: Ribosome-binding factor A (119 aa).

The protein belongs to the RbfA family. In terms of assembly, monomer. Binds 30S ribosomal subunits, but not 50S ribosomal subunits or 70S ribosomes.

Its subcellular location is the cytoplasm. Functionally, one of several proteins that assist in the late maturation steps of the functional core of the 30S ribosomal subunit. Associates with free 30S ribosomal subunits (but not with 30S subunits that are part of 70S ribosomes or polysomes). Required for efficient processing of 16S rRNA. May interact with the 5'-terminal helix region of 16S rRNA. This chain is Ribosome-binding factor A, found in Ligilactobacillus salivarius (strain UCC118) (Lactobacillus salivarius).